A 214-amino-acid chain; its full sequence is Probable transaldolase (214 aa).

Lys83 serves as the catalytic Schiff-base intermediate with substrate.

Belongs to the transaldolase family. Type 3B subfamily.

It localises to the cytoplasm. It catalyses the reaction D-sedoheptulose 7-phosphate + D-glyceraldehyde 3-phosphate = D-erythrose 4-phosphate + beta-D-fructose 6-phosphate. It participates in carbohydrate degradation; pentose phosphate pathway; D-glyceraldehyde 3-phosphate and beta-D-fructose 6-phosphate from D-ribose 5-phosphate and D-xylulose 5-phosphate (non-oxidative stage): step 2/3. Functionally, transaldolase is important for the balance of metabolites in the pentose-phosphate pathway. The protein is Probable transaldolase of Geotalea uraniireducens (strain Rf4) (Geobacter uraniireducens).